Reading from the N-terminus, the 239-residue chain is MRPAGRSVQQVRPVTITRHFTRHAEGSVLIAFGDTRVLCTASVEEGVPRFLKGQGQGWITAEYGMLPRATHTRNPREAAKGKQGGRTLEIQRLIARSLRAAVDLTKLGEYTITLDCDVIQADGGTRTASITGACVALADALSSMQKKGQLKTNPMKGFVAAISVGIVAGEAVCDLEYVEDSAAETDMNVVMMEDGRMIEVQGTAEGEPFSQQELNTLLELARGGIDSLVQAQKAALVGA.

Residues Arg86 and 124 to 126 contribute to the phosphate site; that span reads GTR.

This sequence belongs to the RNase PH family. As to quaternary structure, homohexameric ring arranged as a trimer of dimers.

It carries out the reaction tRNA(n+1) + phosphate = tRNA(n) + a ribonucleoside 5'-diphosphate. Its function is as follows. Phosphorolytic 3'-5' exoribonuclease that plays an important role in tRNA 3'-end maturation. Removes nucleotide residues following the 3'-CCA terminus of tRNAs; can also add nucleotides to the ends of RNA molecules by using nucleoside diphosphates as substrates, but this may not be physiologically important. Probably plays a role in initiation of 16S rRNA degradation (leading to ribosome degradation) during starvation. In Sodalis glossinidius (strain morsitans), this protein is Ribonuclease PH.